We begin with the raw amino-acid sequence, 290 residues long: ATP synthase gamma chain (290 aa).

The protein belongs to the ATPase gamma chain family. In terms of assembly, F-type ATPases have 2 components, CF(1) - the catalytic core - and CF(0) - the membrane proton channel. CF(1) has five subunits: alpha(3), beta(3), gamma(1), delta(1), epsilon(1). CF(0) has three main subunits: a, b and c.

It is found in the cell inner membrane. Produces ATP from ADP in the presence of a proton gradient across the membrane. The gamma chain is believed to be important in regulating ATPase activity and the flow of protons through the CF(0) complex. In Chelativorans sp. (strain BNC1), this protein is ATP synthase gamma chain.